We begin with the raw amino-acid sequence, 890 residues long: UPF0182 protein Ppro_2689 (890 aa).

Transmembrane regions (helical) follow at residues 6–26 (FILILVIVALTVSLLSFLLAF), 50–70 (AGSGLLFAGVLFAGTLLNLLL), 102–122 (LGIPACAILALLVGQWGAMQW), 157–177 (TITAFAGFTLLTSLFLTVLVY), 200–220 (LAILLLLLSCVIAAGFHLDCF), 244–264 (TYRILTILAPLAGTALAIGLW), and 266–286 (GAWRMALLAPLAVIVLHVIGI).

It belongs to the UPF0182 family.

It is found in the cell membrane. The sequence is that of UPF0182 protein Ppro_2689 from Pelobacter propionicus (strain DSM 2379 / NBRC 103807 / OttBd1).